The primary structure comprises 330 residues: MLPLPRRQQQVLQATVQHYVDTVEPVGSRTLVRRFGLDASPATVRSAMGALEQKGLLTQPHTSAGRVPSPKGYRQFVDALLPEPGAAVVQLQRELAELSLQWAALDDLLHHLARRLADLTGLMSIITRPQRQEPRLKALRLVRSGDRLLVFLVESSAASSSLNLRLPPDSSAQLQALEHWLNDQLSKSAINWSGLPSHLQSVGAPLKQALASHNRGRNRQAEGALTTGLAGLLCQPEFQLTTSLRPLLQLVEQQPHELLNPAAATASGGVWIGQEHPHPALSGCAVVQAPYATASGGEGSVALVGPMRMAYATALAAVEAVAGTLSRLLA.

Belongs to the HrcA family.

Negative regulator of class I heat shock genes (grpE-dnaK-dnaJ and groELS operons). Prevents heat-shock induction of these operons. This is Heat-inducible transcription repressor HrcA from Synechococcus sp. (strain RCC307).